The primary structure comprises 435 residues: Adenylosuccinate synthetase (435 aa).

Residues 11–17 (GDEGKGK) and 39–41 (GHT) contribute to the GTP site. Asp12 (proton acceptor) is an active-site residue. Mg(2+) is bound by residues Asp12 and Gly39. Residues 12-15 (DEGK), 37-40 (NAGH), Thr134, Arg148, Asn230, Thr245, and Arg309 each bind IMP. Catalysis depends on His40, which acts as the Proton donor. Substrate is bound at residue 305-311 (VTTGRKR). GTP-binding positions include Arg311, 337–339 (KLD), and 419–421 (GTG).

This sequence belongs to the adenylosuccinate synthetase family. In terms of assembly, homodimer. Mg(2+) serves as cofactor.

It localises to the cytoplasm. It catalyses the reaction IMP + L-aspartate + GTP = N(6)-(1,2-dicarboxyethyl)-AMP + GDP + phosphate + 2 H(+). The protein operates within purine metabolism; AMP biosynthesis via de novo pathway; AMP from IMP: step 1/2. Plays an important role in the de novo pathway and in the salvage pathway of purine nucleotide biosynthesis. Catalyzes the first committed step in the biosynthesis of AMP from IMP. The polypeptide is Adenylosuccinate synthetase (Zygosaccharomyces rouxii (strain ATCC 2623 / CBS 732 / NBRC 1130 / NCYC 568 / NRRL Y-229)).